A 428-amino-acid polypeptide reads, in one-letter code: Glutamate-1-semialdehyde 2,1-aminomutase (428 aa).

K265 carries the N6-(pyridoxal phosphate)lysine modification.

Belongs to the class-III pyridoxal-phosphate-dependent aminotransferase family. HemL subfamily. Homodimer. Pyridoxal 5'-phosphate is required as a cofactor.

Its subcellular location is the cytoplasm. The enzyme catalyses (S)-4-amino-5-oxopentanoate = 5-aminolevulinate. It functions in the pathway porphyrin-containing compound metabolism; protoporphyrin-IX biosynthesis; 5-aminolevulinate from L-glutamyl-tRNA(Glu): step 2/2. This is Glutamate-1-semialdehyde 2,1-aminomutase from Shewanella frigidimarina (strain NCIMB 400).